A 357-amino-acid chain; its full sequence is Aspartate carbamoyltransferase catalytic subunit (357 aa).

A compositionally biased stretch (polar residues) spans 1–15; it reads MSNSIDSQSLPTVSP. Residues 1 to 21 form a disordered region; it reads MSNSIDSQSLPTVSPTDYARF. Arg97 and Thr98 together coordinate carbamoyl phosphate. Lys125 serves as a coordination point for L-aspartate. Arg147, His177, and Gln180 together coordinate carbamoyl phosphate. The L-aspartate site is built by Arg211 and Arg266. Carbamoyl phosphate-binding residues include Gly307 and Pro308.

The protein belongs to the aspartate/ornithine carbamoyltransferase superfamily. ATCase family. Heterododecamer (2C3:3R2) of six catalytic PyrB chains organized as two trimers (C3), and six regulatory PyrI chains organized as three dimers (R2).

The enzyme catalyses carbamoyl phosphate + L-aspartate = N-carbamoyl-L-aspartate + phosphate + H(+). The protein operates within pyrimidine metabolism; UMP biosynthesis via de novo pathway; (S)-dihydroorotate from bicarbonate: step 2/3. Its function is as follows. Catalyzes the condensation of carbamoyl phosphate and aspartate to form carbamoyl aspartate and inorganic phosphate, the committed step in the de novo pyrimidine nucleotide biosynthesis pathway. The sequence is that of Aspartate carbamoyltransferase catalytic subunit from Psychrobacter cryohalolentis (strain ATCC BAA-1226 / DSM 17306 / VKM B-2378 / K5).